The primary structure comprises 267 residues: 3-deoxy-manno-octulosonate cytidylyltransferase 2 (267 aa).

It belongs to the KdsB family.

It is found in the cytoplasm. The enzyme catalyses 3-deoxy-alpha-D-manno-oct-2-ulosonate + CTP = CMP-3-deoxy-beta-D-manno-octulosonate + diphosphate. It participates in nucleotide-sugar biosynthesis; CMP-3-deoxy-D-manno-octulosonate biosynthesis; CMP-3-deoxy-D-manno-octulosonate from 3-deoxy-D-manno-octulosonate and CTP: step 1/1. It functions in the pathway bacterial outer membrane biogenesis; lipopolysaccharide biosynthesis. Its function is as follows. Activates KDO (a required 8-carbon sugar) for incorporation into bacterial lipopolysaccharide in Gram-negative bacteria. This is 3-deoxy-manno-octulosonate cytidylyltransferase 2 from Burkholderia ambifaria (strain MC40-6).